The chain runs to 402 residues: Arabinosyltransferase RRA1 (402 aa).

Residues Met-1–Glu-13 lie on the Cytoplasmic side of the membrane. The helical; Signal-anchor for type II membrane protein transmembrane segment at Cys-14–Ile-34 threads the bilayer. Residues Pro-35–Ser-402 are Lumenal-facing. The DXD motif signature appears at Asp-225–Asp-227. N-linked (GlcNAc...) asparagine glycosylation occurs at Asn-253.

It belongs to the glycosyltransferase 77 family. As to expression, expressed in leaf meristem and at points of cauline leaf attachments on the primary stem. Expressed at low levels in siliques.

The protein localises to the golgi apparatus membrane. In terms of biological role, plays a role in the arabinosylation of cell wall components. Involved in the arabinosylation of extensin proteins in root hair cells. Extensins are structural glycoproteins present in cell walls and its arabinosylation is important for root hair cell development. This chain is Arabinosyltransferase RRA1, found in Arabidopsis thaliana (Mouse-ear cress).